A 172-amino-acid polypeptide reads, in one-letter code: HTH-type transcriptional regulator IscR (172 aa).

The HTH rrf2-type domain occupies 2-131; it reads RLTSKGRYAV…NNITLGELMR (130 aa). Positions 28–51 form a DNA-binding region, H-T-H motif; that stretch reads LADISERQGISLSYLEQLFSRLRK. Positions 92, 98, and 104 each coordinate [2Fe-2S] cluster.

[2Fe-2S] cluster serves as cofactor.

Its function is as follows. Regulates the transcription of several operons and genes involved in the biogenesis of Fe-S clusters and Fe-S-containing proteins. The chain is HTH-type transcriptional regulator IscR from Photobacterium profundum (strain SS9).